Here is a 562-residue protein sequence, read N- to C-terminus: Dihydroxy-acid dehydratase (562 aa).

Asp80 is a Mg(2+) binding site. Cys121 contacts [2Fe-2S] cluster. Positions 122 and 123 each coordinate Mg(2+). Lys123 carries the N6-carboxylysine modification. Cys194 contributes to the [2Fe-2S] cluster binding site. Glu446 contributes to the Mg(2+) binding site. Ser472 acts as the Proton acceptor in catalysis.

Belongs to the IlvD/Edd family. As to quaternary structure, homodimer. [2Fe-2S] cluster is required as a cofactor. The cofactor is Mg(2+).

It catalyses the reaction (2R)-2,3-dihydroxy-3-methylbutanoate = 3-methyl-2-oxobutanoate + H2O. It carries out the reaction (2R,3R)-2,3-dihydroxy-3-methylpentanoate = (S)-3-methyl-2-oxopentanoate + H2O. The protein operates within amino-acid biosynthesis; L-isoleucine biosynthesis; L-isoleucine from 2-oxobutanoate: step 3/4. Its pathway is amino-acid biosynthesis; L-valine biosynthesis; L-valine from pyruvate: step 3/4. Functions in the biosynthesis of branched-chain amino acids. Catalyzes the dehydration of (2R,3R)-2,3-dihydroxy-3-methylpentanoate (2,3-dihydroxy-3-methylvalerate) into 2-oxo-3-methylpentanoate (2-oxo-3-methylvalerate) and of (2R)-2,3-dihydroxy-3-methylbutanoate (2,3-dihydroxyisovalerate) into 2-oxo-3-methylbutanoate (2-oxoisovalerate), the penultimate precursor to L-isoleucine and L-valine, respectively. The sequence is that of Dihydroxy-acid dehydratase from Macrococcus caseolyticus (strain JCSC5402) (Macrococcoides caseolyticum).